We begin with the raw amino-acid sequence, 331 residues long: Phosphoribosylformylglycinamidine cyclo-ligase (331 aa).

The protein belongs to the AIR synthase family.

The protein localises to the cytoplasm. The catalysed reaction is 2-formamido-N(1)-(5-O-phospho-beta-D-ribosyl)acetamidine + ATP = 5-amino-1-(5-phospho-beta-D-ribosyl)imidazole + ADP + phosphate + H(+). It participates in purine metabolism; IMP biosynthesis via de novo pathway; 5-amino-1-(5-phospho-D-ribosyl)imidazole from N(2)-formyl-N(1)-(5-phospho-D-ribosyl)glycinamide: step 2/2. The chain is Phosphoribosylformylglycinamidine cyclo-ligase from Clostridium botulinum (strain 657 / Type Ba4).